A 473-amino-acid chain; its full sequence is Photosystem II CP43 reaction center protein (473 aa).

A propeptide spanning residues 1 to 14 (MKTLYSLRRFYPVE) is cleaved from the precursor. Position 15 is an N-acetylthreonine (Thr15). Thr15 is subject to Phosphothreonine. 5 helical membrane-spanning segments follow: residues 69 to 93 (LFEV…PHLA), 134 to 155 (LLGP…KDRN), 178 to 200 (KALY…RKIT), 255 to 275 (KPFA…LSYS), and 291 to 312 (WFNN…ASQA). Residue Glu367 coordinates [CaMn4O5] cluster. The chain crosses the membrane as a helical span at residues 447-471 (RARAAAAGFEKGIDRDFEPVLSMTP).

Belongs to the PsbB/PsbC family. PsbC subfamily. As to quaternary structure, PSII is composed of 1 copy each of membrane proteins PsbA, PsbB, PsbC, PsbD, PsbE, PsbF, PsbH, PsbI, PsbJ, PsbK, PsbL, PsbM, PsbT, PsbX, PsbY, PsbZ, Psb30/Ycf12, at least 3 peripheral proteins of the oxygen-evolving complex and a large number of cofactors. It forms dimeric complexes. Binds multiple chlorophylls and provides some of the ligands for the Ca-4Mn-5O cluster of the oxygen-evolving complex. It may also provide a ligand for a Cl- that is required for oxygen evolution. PSII binds additional chlorophylls, carotenoids and specific lipids. is required as a cofactor.

Its subcellular location is the plastid. The protein resides in the chloroplast thylakoid membrane. Functionally, one of the components of the core complex of photosystem II (PSII). It binds chlorophyll and helps catalyze the primary light-induced photochemical processes of PSII. PSII is a light-driven water:plastoquinone oxidoreductase, using light energy to abstract electrons from H(2)O, generating O(2) and a proton gradient subsequently used for ATP formation. This chain is Photosystem II CP43 reaction center protein, found in Liriodendron tulipifera (Tuliptree).